The sequence spans 348 residues: PDZ and LIM domain protein 2 (348 aa).

The PDZ domain occupies M1 to Q84. Residues S67–G139 are disordered. Residues R103–L118 are compositionally biased toward polar residues. Phosphoserine is present on residues S117, S119, and S124. Phosphothreonine occurs at positions 128 and 132. 8 positions are modified to phosphoserine: S133, S153, S191, S197, S198, S202, S209, and S262. The segment at G165–S202 is disordered. The span at G193–S202 shows a compositional bias: low complexity. The tract at residues E249 to S275 is disordered. Positions L257 to S270 are enriched in low complexity. The region spanning H280 to A340 is the LIM zinc-binding domain.

Interacts with alpha-actinins ACTN1 and ACTN4, FLNA and MYH9. Interacts (via LIM zinc-binding domain) with MKRN2.

It is found in the cytoplasm. Its subcellular location is the cytoskeleton. Probable adapter protein located at the actin cytoskeleton that promotes cell attachment. Necessary for the migratory capacity of epithelial cells. Overexpression enhances cell adhesion to collagen and fibronectin and suppresses anchorage independent growth. May contribute to tumor cell migratory capacity. The protein is PDZ and LIM domain protein 2 (PDLIM2) of Bos taurus (Bovine).